Here is a 211-residue protein sequence, read N- to C-terminus: Thymidylate kinase (211 aa).

Residue 10 to 17 (GVEGCGKT) participates in ATP binding.

This sequence belongs to the thymidylate kinase family.

The enzyme catalyses dTMP + ATP = dTDP + ADP. In terms of biological role, phosphorylation of dTMP to form dTDP in both de novo and salvage pathways of dTTP synthesis. The chain is Thymidylate kinase from Nostoc punctiforme (strain ATCC 29133 / PCC 73102).